The sequence spans 329 residues: DNA-directed RNA polymerase subunit alpha (329 aa).

Positions 1–235 (MQGSVIEFLK…EQLDAFVDLR (235 aa)) are alpha N-terminal domain (alpha-NTD). Residues 249 to 329 (FDPILLRPVD…NWPPASIAED (81 aa)) are alpha C-terminal domain (alpha-CTD).

It belongs to the RNA polymerase alpha chain family. Homodimer. The RNAP catalytic core consists of 2 alpha, 1 beta, 1 beta' and 1 omega subunit. When a sigma factor is associated with the core the holoenzyme is formed, which can initiate transcription.

The catalysed reaction is RNA(n) + a ribonucleoside 5'-triphosphate = RNA(n+1) + diphosphate. In terms of biological role, DNA-dependent RNA polymerase catalyzes the transcription of DNA into RNA using the four ribonucleoside triphosphates as substrates. This Haemophilus ducreyi (strain 35000HP / ATCC 700724) protein is DNA-directed RNA polymerase subunit alpha.